Consider the following 157-residue polypeptide: Protein Smg (157 aa).

It belongs to the Smg family.

In Buchnera aphidicola subsp. Acyrthosiphon pisum (strain 5A), this protein is Protein Smg.